The following is a 272-amino-acid chain: Tryptophan synthase alpha chain (272 aa).

Active-site proton acceptor residues include glutamate 60 and aspartate 71.

The protein belongs to the TrpA family. Tetramer of two alpha and two beta chains.

The enzyme catalyses (1S,2R)-1-C-(indol-3-yl)glycerol 3-phosphate + L-serine = D-glyceraldehyde 3-phosphate + L-tryptophan + H2O. Its pathway is amino-acid biosynthesis; L-tryptophan biosynthesis; L-tryptophan from chorismate: step 5/5. Functionally, the alpha subunit is responsible for the aldol cleavage of indoleglycerol phosphate to indole and glyceraldehyde 3-phosphate. The polypeptide is Tryptophan synthase alpha chain (Methanosarcina acetivorans (strain ATCC 35395 / DSM 2834 / JCM 12185 / C2A)).